We begin with the raw amino-acid sequence, 589 residues long: Probable translation initiation factor IF-2 (589 aa).

Residues 14–231 form the tr-type G domain; the sequence is LRQPIVCVLG…GLAQRFLESE (218 aa). Positions 23-30 are G1; the sequence is GHVDHGKT. 23–30 is a binding site for GTP; it reads GHVDHGKT. Residues 48–52 are G2; the sequence is GITQR. The segment at 84-87 is G3; sequence DTPG. GTP is bound by residues 84–88 and 138–141; these read DTPGH and NKID. The interval 138-141 is G4; it reads NKID. The segment at 206–208 is G5; sequence SAK.

The protein belongs to the TRAFAC class translation factor GTPase superfamily. Classic translation factor GTPase family. IF-2 subfamily.

Functionally, function in general translation initiation by promoting the binding of the formylmethionine-tRNA to ribosomes. Seems to function along with eIF-2. This Thermoplasma volcanium (strain ATCC 51530 / DSM 4299 / JCM 9571 / NBRC 15438 / GSS1) protein is Probable translation initiation factor IF-2.